A 291-amino-acid chain; its full sequence is Membrane protein insertase YidC (291 aa).

The N-terminal stretch at 1-19 is a signal peptide; the sequence is MKKKALLPLLLGVMVFLAG. Cysteine 20 is lipidated: N-palmitoyl cysteine. The S-diacylglycerol cysteine moiety is linked to residue cysteine 20. A run of 4 helical transmembrane segments spans residues 56 to 76, 134 to 154, 170 to 190, and 211 to 231; these read YGIAIIVLVLVIRIILLPFML, ALGCLPVLIQMPVVMGLYFVL, WFNLIHPDIWITIIAGVLYFI, and MIVSPIMIIWISLSSASALGL. The disordered stretch occupies residues 266-291; that stretch reads FKENNSNSNKKGKNTQVVSKNNKKKK.

This sequence belongs to the OXA1/ALB3/YidC family. Type 2 subfamily.

Its subcellular location is the cell membrane. Functionally, required for the insertion and/or proper folding and/or complex formation of integral membrane proteins into the membrane. Involved in integration of membrane proteins that insert both dependently and independently of the Sec translocase complex, as well as at least some lipoproteins. This Staphylococcus haemolyticus (strain JCSC1435) protein is Membrane protein insertase YidC.